The primary structure comprises 436 residues: Ribulose bisphosphate carboxylase large chain (436 aa).

The substrate site is built by asparagine 104 and threonine 154. The Proton acceptor role is filled by lysine 156. Substrate is bound at residue lysine 158. Residues lysine 182, aspartate 184, and glutamate 185 each contribute to the Mg(2+) site. Residue lysine 182 is modified to N6-carboxylysine. The active-site Proton acceptor is the histidine 275. Substrate is bound by residues arginine 276, histidine 308, and serine 360.

The protein belongs to the RuBisCO large chain family. Type I subfamily. As to quaternary structure, heterohexadecamer of 8 large chains and 8 small chains. It depends on Mg(2+) as a cofactor.

The protein resides in the plastid. Its subcellular location is the chloroplast. The catalysed reaction is 2 (2R)-3-phosphoglycerate + 2 H(+) = D-ribulose 1,5-bisphosphate + CO2 + H2O. It catalyses the reaction D-ribulose 1,5-bisphosphate + O2 = 2-phosphoglycolate + (2R)-3-phosphoglycerate + 2 H(+). In terms of biological role, ruBisCO catalyzes two reactions: the carboxylation of D-ribulose 1,5-bisphosphate, the primary event in carbon dioxide fixation, as well as the oxidative fragmentation of the pentose substrate in the photorespiration process. Both reactions occur simultaneously and in competition at the same active site. This chain is Ribulose bisphosphate carboxylase large chain, found in Euglena stellata.